Here is a 959-residue protein sequence, read N- to C-terminus: Isoleucine--tRNA ligase (959 aa).

The 'HIGH' region signature appears at 66–76 (PYANGDLHIGH). E592 contacts L-isoleucyl-5'-AMP. Positions 633–637 (KMSKS) match the 'KMSKS' region motif. ATP is bound at residue K636. Zn(2+) contacts are provided by C922, C925, C942, and C945.

Belongs to the class-I aminoacyl-tRNA synthetase family. IleS type 1 subfamily. In terms of assembly, monomer. Requires Zn(2+) as cofactor.

It is found in the cytoplasm. The catalysed reaction is tRNA(Ile) + L-isoleucine + ATP = L-isoleucyl-tRNA(Ile) + AMP + diphosphate. In terms of biological role, catalyzes the attachment of isoleucine to tRNA(Ile). As IleRS can inadvertently accommodate and process structurally similar amino acids such as valine, to avoid such errors it has two additional distinct tRNA(Ile)-dependent editing activities. One activity is designated as 'pretransfer' editing and involves the hydrolysis of activated Val-AMP. The other activity is designated 'posttransfer' editing and involves deacylation of mischarged Val-tRNA(Ile). In Ralstonia pickettii (strain 12J), this protein is Isoleucine--tRNA ligase.